The following is a 203-amino-acid chain: Auxin-induced protein 22E (203 aa).

The short motif at 15–19 (LRLGL) is the EAR-like (transcriptional repression) element. The segment at 15 to 77 (LRLGLPGSDE…DHNEDSVQPA (63 aa)) is disordered. Residues 43–52 (SSPELEESRC) show a composition bias toward basic and acidic residues. The span at 58–67 (SDSSDSTTTS) shows a compositional bias: low complexity. The region spanning 107 to 199 (GMYLKVSMAG…RIIKGSEAKG (93 aa)) is the PB1 domain.

It belongs to the Aux/IAA family. Homodimers and heterodimers.

It localises to the nucleus. Aux/IAA proteins are short-lived transcriptional factors that function as repressors of early auxin response genes at low auxin concentrations. Repression is thought to result from the interaction with auxin response factors (ARFs), proteins that bind to the auxin-responsive promoter element (AuxRE). Formation of heterodimers with ARF proteins may alter their ability to modulate early auxin response genes expression. This Vigna radiata var. radiata (Mung bean) protein is Auxin-induced protein 22E (AUX22E).